Here is a 439-residue protein sequence, read N- to C-terminus: MDRAPRISFTSLGCPKALVDSERIITRLRAEGYELARKHDGADIVIVNTCGFLDSAKQESLSAIGEAMAENGKVIVTGCMGAEPEQIEQAYPGVLSITGPQQYESVLDAVHRALPPAHNPHLDLVPPQGIKLTPRHYAYLKISEGCNNRCTFCIIPKLRGDLVSRPANDVLREAERLVGAGVKELLVISQDTSAYGVDLKYAESPWKDRQVRAKFLDLARELGELGAWVRLQYVYPYPHVDEVIALMTQGTVLPYLDIPFQHASPEVLKAMKRPAAQDKTLARIKRWREECPDLALRSTFIVGFPGETDADFAYLLDWLDEAEIDRLGCFKYEPVAGATSNAIANPVPEEVKQERYNALMARQQKISARRLKRKVGTRQQIIIDEVGPTVARGRSKADAPEIDGAVYLSSRRPLRVGEIVTAKIERADQYDLHGSVAGF.

An MTTase N-terminal domain is found at 5–115 (PRISFTSLGC…VLDAVHRALP (111 aa)). [4Fe-4S] cluster-binding residues include C14, C50, C79, C146, C150, and C153. The Radical SAM core domain maps to 132-369 (LTPRHYAYLK…MARQQKISAR (238 aa)). Residues 372–438 (KRKVGTRQQI…QYDLHGSVAG (67 aa)) enclose the TRAM domain.

This sequence belongs to the methylthiotransferase family. RimO subfamily. The cofactor is [4Fe-4S] cluster.

The protein resides in the cytoplasm. It carries out the reaction L-aspartate(89)-[ribosomal protein uS12]-hydrogen + (sulfur carrier)-SH + AH2 + 2 S-adenosyl-L-methionine = 3-methylsulfanyl-L-aspartate(89)-[ribosomal protein uS12]-hydrogen + (sulfur carrier)-H + 5'-deoxyadenosine + L-methionine + A + S-adenosyl-L-homocysteine + 2 H(+). Functionally, catalyzes the methylthiolation of an aspartic acid residue of ribosomal protein uS12. In Bradyrhizobium diazoefficiens (strain JCM 10833 / BCRC 13528 / IAM 13628 / NBRC 14792 / USDA 110), this protein is Ribosomal protein uS12 methylthiotransferase RimO.